The chain runs to 102 residues: uncharacterized protein (102 aa).

The disordered stretch occupies residues 79–102 (AELLHPSPAPMPPATHGRSAAPCS).

This is an uncharacterized protein from Homo sapiens (Human).